A 712-amino-acid chain; its full sequence is Polyribonucleotide nucleotidyltransferase (712 aa).

Residues aspartate 487 and aspartate 493 each contribute to the Mg(2+) site. The KH domain maps to 554–613 (PKIITMTINPDKIRDVIGPSGKQINKIIEETGVKIDIEQDGTVFISSINQEMNDKAKKII). Positions 623-691 (GEIYEGKVKR…KQGRVNLSRK (69 aa)) constitute an S1 motif domain.

This sequence belongs to the polyribonucleotide nucleotidyltransferase family. Requires Mg(2+) as cofactor.

The protein localises to the cytoplasm. It carries out the reaction RNA(n+1) + phosphate = RNA(n) + a ribonucleoside 5'-diphosphate. Involved in mRNA degradation. Catalyzes the phosphorolysis of single-stranded polyribonucleotides processively in the 3'- to 5'-direction. This is Polyribonucleotide nucleotidyltransferase from Bacillus anthracis.